Reading from the N-terminus, the 400-residue chain is Phosphoglycerate kinase (400 aa).

Residues 21–23 (DFN), R37, 60–63 (HLGR), R121, and R154 each bind substrate. ATP-binding positions include K204, E326, and 355-358 (GGDS).

The protein belongs to the phosphoglycerate kinase family. In terms of assembly, monomer.

It localises to the cytoplasm. It catalyses the reaction (2R)-3-phosphoglycerate + ATP = (2R)-3-phospho-glyceroyl phosphate + ADP. It functions in the pathway carbohydrate degradation; glycolysis; pyruvate from D-glyceraldehyde 3-phosphate: step 2/5. This is Phosphoglycerate kinase from Chloroflexus aggregans (strain MD-66 / DSM 9485).